The chain runs to 314 residues: Synaptophysin (314 aa).

Over 1-25 (MLLLADMDVVNQLVAGGQFRVVKEP) the chain is Cytoplasmic. One can recognise an MARVEL domain in the interval 21 to 228 (VVKEPLGFVK…NLWFVFKETG (208 aa)). Residues 26–49 (LGFVKVLQWVFAIFAFATCGSYTG) form a helical membrane-spanning segment. Topologically, residues 50–107 (ELRLSVECANKTESALNIEVEFEYPFRLHQVYFDAPSCVKGGTTKIFLVGDYSSSAEF) are vesicular. N-linked (GlcNAc...) asparagine glycosylation is present at Asn-59. Tyr-81 carries the phosphotyrosine modification. A helical membrane pass occupies residues 108-131 (FVTVAVFAFLYSMGALATYIFLQN). Residues 132 to 138 (KYRENNK) are Cytoplasmic-facing. The helical transmembrane segment at 139–162 (GPMMDFLATAVFAFMWLVSSSAWA) threads the bilayer. Residues 163–200 (KGLSDVKMATDPENIIKEMPMCRQTGNTCKELRDPVTS) are Vesicular-facing. Residues 201 to 224 (GLNTSVVFGFLNLVLWVGNLWFVF) traverse the membrane as a helical segment. Topologically, residues 225 to 314 (KETGWAAPFM…GAPTSFSNQM (90 aa)) are cytoplasmic. Thr-227 is modified (phosphothreonine). The tract at residues 239 to 314 (GAPEKQPAPG…GAPTSFSNQM (76 aa)) is disordered. Positions 254–264 (AGYGQGPGGYG) are enriched in gly residues. The repeats, Gly-rich stretch occupies residues 255–305 (GYGQGPGGYGPQDSYGPQGGYQPDYGQPASGGGGGYGPQGDYGQQGYGQQG). Low complexity predominate over residues 265–282 (PQDSYGPQGGYQPDYGQP). Residues Tyr-279 and Tyr-296 each carry the phosphotyrosine modification. The span at 283–303 (ASGGGGGYGPQGDYGQQGYGQ) shows a compositional bias: gly residues.

It belongs to the synaptophysin/synaptobrevin family. As to quaternary structure, homohexamer or homotetramer. Interacts with SRCIN1. Interacts with VAMP2; the interaction is inhibited by interaction of VAPM2 with SEPT8. In terms of processing, ubiquitinated; mediated by SIAH1 or SIAH2 and leading to its subsequent proteasomal degradation. Phosphorylated by SRC.

The protein resides in the cytoplasmic vesicle. Its subcellular location is the secretory vesicle. It localises to the synaptic vesicle membrane. The protein localises to the synapse. It is found in the synaptosome. In terms of biological role, possibly involved in structural functions as organizing other membrane components or in targeting the vesicles to the plasma membrane. Involved in the regulation of short-term and long-term synaptic plasticity. This is Synaptophysin (Syp) from Mus musculus (Mouse).